Reading from the N-terminus, the 274-residue chain is Cytochrome b-c1 complex subunit Rieske, mitochondrial (274 aa).

Over 79–103 the chain is Mitochondrial matrix; that stretch reads SHTDIKVPDFSEYRRLEVLDSTKSS. The helical transmembrane segment at 104 to 140 threads the bilayer; that stretch reads RESSEARKGFSYLVTGVTTVGVAYAAKNAVTQFVSSM. The Mitochondrial intermembrane portion of the chain corresponds to 141–274; the sequence is SASADVLALA…FTSDDMVIVG (134 aa). Positions 187 to 272 constitute a Rieske domain; that stretch reads EAAVELSQLR…YEFTSDDMVI (86 aa). Residues Cys-217, His-219, Cys-236, His-239, and Ser-241 each coordinate [2Fe-2S] cluster. A disulfide bridge connects residues Cys-222 and Cys-238.

This sequence belongs to the Rieske iron-sulfur protein family. In terms of assembly, component of the ubiquinol-cytochrome c oxidoreductase (cytochrome b-c1 complex, complex III, CIII), a multisubunit enzyme composed of 11 subunits. The complex is composed of 3 respiratory subunits cytochrome b, cytochrome c1 and Rieske protein UQCRFS1, 2 core protein subunits UQCRC1/QCR1 and UQCRC2/QCR2, and 6 low-molecular weight protein subunits UQCRH/QCR6, UQCRB/QCR7, UQCRQ/QCR8, UQCR10/QCR9, UQCR11/QCR10 and subunit 9, the cleavage product of Rieske protein UQCRFS1. The complex exists as an obligatory dimer and forms supercomplexes (SCs) in the inner mitochondrial membrane with NADH-ubiquinone oxidoreductase (complex I, CI) and cytochrome c oxidase (complex IV, CIV), resulting in different assemblies (supercomplex SCI(1)III(2)IV(1) and megacomplex MCI(2)III(2)IV(2)). Incorporation of the Rieske protein UQCRFS1 is the penultimate step in complex III assembly. Interacts with TTC19, which is involved in the clearance of UQCRFS1 fragments. Component of the ubiquinol-cytochrome c oxidoreductase (cytochrome b-c1 complex, complex III, CIII). Subunit 9 corresponds to the mitochondrial targeting sequence (MTS) of Rieske protein UQCRFS1. It is retained after processing and incorporated inside complex III, where it remains bound to the complex and localizes between the 2 core subunits UQCRC1/QCR1 and UQCRC2/QCR2. The cofactor is [2Fe-2S] cluster. In terms of processing, proteolytic processing is necessary for the correct insertion of UQCRFS1 in the complex III dimer. Several fragments are generated during UQCRFS1 insertion, most probably due to the endogenous matrix-processing peptidase (MPP) activity of the 2 core protein subunits UQCRC1/QCR1 and UQCRC2/QCR2, which are homologous to the 2 mitochondrial-processing peptidase (MPP) subunits beta-MPP and alpha-MPP respectively. The action of the protease is also necessary for the clearance of the UQCRFS1 fragments.

The protein localises to the mitochondrion inner membrane. The enzyme catalyses a quinol + 2 Fe(III)-[cytochrome c](out) = a quinone + 2 Fe(II)-[cytochrome c](out) + 2 H(+)(out). Functionally, component of the ubiquinol-cytochrome c oxidoreductase, a multisubunit transmembrane complex that is part of the mitochondrial electron transport chain which drives oxidative phosphorylation. The respiratory chain contains 3 multisubunit complexes succinate dehydrogenase (complex II, CII), ubiquinol-cytochrome c oxidoreductase (cytochrome b-c1 complex, complex III, CIII) and cytochrome c oxidase (complex IV, CIV), that cooperate to transfer electrons derived from NADH and succinate to molecular oxygen, creating an electrochemical gradient over the inner membrane that drives transmembrane transport and the ATP synthase. The cytochrome b-c1 complex catalyzes electron transfer from ubiquinol to cytochrome c, linking this redox reaction to translocation of protons across the mitochondrial inner membrane, with protons being carried across the membrane as hydrogens on the quinol. In the process called Q cycle, 2 protons are consumed from the matrix, 4 protons are released into the intermembrane space and 2 electrons are passed to cytochrome c. The Rieske protein is a catalytic core subunit containing a [2Fe-2S] iron-sulfur cluster. It cycles between 2 conformational states during catalysis to transfer electrons from the quinol bound in the Q(0) site in cytochrome b to cytochrome c1. Incorporation of UQCRFS1 is the penultimate step in complex III assembly. In terms of biological role, component of the ubiquinol-cytochrome c oxidoreductase (cytochrome b-c1 complex, complex III, CIII). UQCRFS1 undergoes proteolytic processing once it is incorporated in the complex III dimer. One of the fragments, called subunit 9, corresponds to its mitochondrial targeting sequence (MTS). The proteolytic processing is necessary for the correct insertion of UQCRFS1 in the complex III dimer, but the persistence of UQCRFS1-derived fragments may prevent newly imported UQCRFS1 to be processed and assembled into complex III and is detrimental for the complex III structure and function. This Gorilla gorilla gorilla (Western lowland gorilla) protein is Cytochrome b-c1 complex subunit Rieske, mitochondrial (UQCRFS1).